The sequence spans 390 residues: Succinate--CoA ligase [ADP-forming] subunit beta (390 aa).

One can recognise an ATP-grasp domain in the interval Lys9–Glu244. Residues Lys46, Gly53–Gly55, Glu99, Leu102, and Glu107 contribute to the ATP site. Positions 199 and 213 each coordinate Mg(2+). Residues Asn264 and Gly321–Val323 contribute to the substrate site.

The protein belongs to the succinate/malate CoA ligase beta subunit family. In terms of assembly, heterotetramer of two alpha and two beta subunits. Requires Mg(2+) as cofactor.

It carries out the reaction succinate + ATP + CoA = succinyl-CoA + ADP + phosphate. It catalyses the reaction GTP + succinate + CoA = succinyl-CoA + GDP + phosphate. Its pathway is carbohydrate metabolism; tricarboxylic acid cycle; succinate from succinyl-CoA (ligase route): step 1/1. Functionally, succinyl-CoA synthetase functions in the citric acid cycle (TCA), coupling the hydrolysis of succinyl-CoA to the synthesis of either ATP or GTP and thus represents the only step of substrate-level phosphorylation in the TCA. The beta subunit provides nucleotide specificity of the enzyme and binds the substrate succinate, while the binding sites for coenzyme A and phosphate are found in the alpha subunit. The polypeptide is Succinate--CoA ligase [ADP-forming] subunit beta (Campylobacter curvus (strain 525.92)).